The following is a 113-amino-acid chain: Gigasin-5 (113 aa).

As to expression, component of the organic matrix of calcified shell layers.

The sequence is that of Gigasin-5 from Magallana gigas (Pacific oyster).